We begin with the raw amino-acid sequence, 289 residues long: 2-dehydro-3-deoxyphosphooctonate aldolase (289 aa).

This sequence belongs to the KdsA family.

It localises to the cytoplasm. It catalyses the reaction D-arabinose 5-phosphate + phosphoenolpyruvate + H2O = 3-deoxy-alpha-D-manno-2-octulosonate-8-phosphate + phosphate. Its pathway is carbohydrate biosynthesis; 3-deoxy-D-manno-octulosonate biosynthesis; 3-deoxy-D-manno-octulosonate from D-ribulose 5-phosphate: step 2/3. It functions in the pathway bacterial outer membrane biogenesis; lipopolysaccharide biosynthesis. This is 2-dehydro-3-deoxyphosphooctonate aldolase from Cupriavidus necator (strain ATCC 17699 / DSM 428 / KCTC 22496 / NCIMB 10442 / H16 / Stanier 337) (Ralstonia eutropha).